The chain runs to 201 residues: Phosphoheptose isomerase (201 aa).

Positions 36-195 (IAKSLNEGGK…EDILFEIPAA (160 aa)) constitute an SIS domain. 51–53 (NGG) is a binding site for substrate. Positions 60 and 64 each coordinate Zn(2+). Substrate-binding positions include Glu64, 93-94 (ND), 119-121 (STS), Ser124, and Gln171. Zn(2+)-binding residues include Gln171 and His179.

The protein belongs to the SIS family. GmhA subfamily. The cofactor is Zn(2+).

It localises to the cytoplasm. It carries out the reaction 2 D-sedoheptulose 7-phosphate = D-glycero-alpha-D-manno-heptose 7-phosphate + D-glycero-beta-D-manno-heptose 7-phosphate. The protein operates within carbohydrate biosynthesis; D-glycero-D-manno-heptose 7-phosphate biosynthesis; D-glycero-alpha-D-manno-heptose 7-phosphate and D-glycero-beta-D-manno-heptose 7-phosphate from sedoheptulose 7-phosphate: step 1/1. Catalyzes the isomerization of sedoheptulose 7-phosphate in D-glycero-D-manno-heptose 7-phosphate. This chain is Phosphoheptose isomerase, found in Thermodesulfovibrio yellowstonii (strain ATCC 51303 / DSM 11347 / YP87).